We begin with the raw amino-acid sequence, 512 residues long: Ribonuclease Y (512 aa).

Residues 3-23 (FQIILVVIISALVGLVIGFFI) traverse the membrane as a helical segment. The region spanning 202-265 (TVAVIPLPND…EVARLALERL (64 aa)) is the KH domain. Positions 328–421 (VLKHSIEVCH…VQAADAISAA (94 aa)) constitute an HD domain.

The protein belongs to the RNase Y family.

Its subcellular location is the cell membrane. Functionally, endoribonuclease that initiates mRNA decay. The sequence is that of Ribonuclease Y from Desulforamulus reducens (strain ATCC BAA-1160 / DSM 100696 / MI-1) (Desulfotomaculum reducens).